The primary structure comprises 559 residues: ADP,ATP carrier protein 1 (559 aa).

The segment covering 1–10 (MNEVENNNHS) has biased composition (polar residues). Positions 1–22 (MNEVENNNHSFPREDIPTEDEI) are disordered. N-linked (GlcNAc...) asparagine glycosylation occurs at Asn-8. 4 helical membrane passes run 46 to 66 (FALL…MRIL), 79 to 99 (TILF…VFLI), 111 to 131 (IFSI…AVFL), and 174 to 194 (IVFI…FLSF). Asn-196 is a glycosylation site (N-linked (GlcNAc...) asparagine). 2 helical membrane passes run 210 to 230 (PLII…GAFF) and 242 to 262 (QVLL…VIFL). A glycan (N-linked (GlcNAc...) asparagine) is linked at Asn-290. 3 helical membrane-spanning segments follow: residues 305 to 325 (LLLA…MVES), 354 to 373 (QYMT…SSYV), and 377 to 397 (GFLL…VLFL). Asn-403 is a glycosylation site (N-linked (GlcNAc...) asparagine). 3 consecutive transmembrane segments (helical) span residues 425–447 (YVLE…YSAF), 473–493 (IFGK…FEAL), and 503–523 (PITA…IIYL).

This sequence belongs to the ADP/ATP translocase tlc family.

Its subcellular location is the cell membrane. Its function is as follows. ATP transporter involved in the uptake of ATP from the host cell cytoplasm. Provides the microsporidian cell with host ATP in exchange for ADP. This is an obligate exchange system. This energy acquiring activity is an important component of microsporidian parasitism. The protein is ADP,ATP carrier protein 1 (NTT1) of Encephalitozoon cuniculi (strain GB-M1) (Microsporidian parasite).